Consider the following 361-residue polypeptide: MVKQVFNFNAGPSALPKPALERAQKELLNFNDTQMSVMELSHRSQSYEEVHEQAQNLLRELLQIPNDYQILFLQGGASLQFTMLPMNLLTKGTIGNYVLTGSWSEKALKEAKLLGETHIAASTKANSYQSIPDFSEFQLNENDAYLHITSNNTIYGTQYQNFPEINHAPLIADMSSDILSRPLKVNQFGMIYAGAQKNLGPSGVTVVIVKKDLLNTKVEQVPTMLQYATHIKSDSLYNTPPTFSIYMLRNVLDWIKDLGGAEAIAKQNEEKAKIIYDTIDESNGFYVGHAEKGSRSLMNVTFNLRNEELNQQFLAKAKEQGFVGLNGHRSVGGCRASIYNAVPIDACIALRELMIQFKENA.

An L-glutamate-binding site is contributed by Arg-43. Pyridoxal 5'-phosphate-binding positions include 77 to 78 (AS), Trp-103, Thr-153, Asp-173, and Gln-196. Lys-197 is modified (N6-(pyridoxal phosphate)lysine). A pyridoxal 5'-phosphate-binding site is contributed by 238–239 (NT).

It belongs to the class-V pyridoxal-phosphate-dependent aminotransferase family. SerC subfamily. In terms of assembly, homodimer. Requires pyridoxal 5'-phosphate as cofactor.

The protein resides in the cytoplasm. It carries out the reaction O-phospho-L-serine + 2-oxoglutarate = 3-phosphooxypyruvate + L-glutamate. The catalysed reaction is 4-(phosphooxy)-L-threonine + 2-oxoglutarate = (R)-3-hydroxy-2-oxo-4-phosphooxybutanoate + L-glutamate. It participates in amino-acid biosynthesis; L-serine biosynthesis; L-serine from 3-phospho-D-glycerate: step 2/3. Its function is as follows. Catalyzes the reversible conversion of 3-phosphohydroxypyruvate to phosphoserine and of 3-hydroxy-2-oxo-4-phosphonooxybutanoate to phosphohydroxythreonine. The polypeptide is Phosphoserine aminotransferase (serC) (Alkalihalobacillus alcalophilus (Bacillus alcalophilus)).